Here is a 370-residue protein sequence, read N- to C-terminus: Phospho-2-dehydro-3-deoxyheptonate aldolase, phenylalanine-inhibited (370 aa).

Belongs to the class-I DAHP synthase family.

It catalyses the reaction D-erythrose 4-phosphate + phosphoenolpyruvate + H2O = 7-phospho-2-dehydro-3-deoxy-D-arabino-heptonate + phosphate. It functions in the pathway metabolic intermediate biosynthesis; chorismate biosynthesis; chorismate from D-erythrose 4-phosphate and phosphoenolpyruvate: step 1/7. Inhibited by phenyalanine. Functionally, stereospecific condensation of phosphoenolpyruvate (PEP) and D-erythrose-4-phosphate (E4P) giving rise to 3-deoxy-D-arabino-heptulosonate-7-phosphate (DAHP). The protein is Phospho-2-dehydro-3-deoxyheptonate aldolase, phenylalanine-inhibited (ARO3) of Saccharomyces cerevisiae (strain ATCC 204508 / S288c) (Baker's yeast).